The sequence spans 472 residues: ATP synthase subunit beta (472 aa).

150 to 157 lines the ATP pocket; that stretch reads GGAGVGKT.

The protein belongs to the ATPase alpha/beta chains family. F-type ATPases have 2 components, CF(1) - the catalytic core - and CF(0) - the membrane proton channel. CF(1) has five subunits: alpha(3), beta(3), gamma(1), delta(1), epsilon(1). CF(0) has four main subunits: a, b, b' and c.

It is found in the cellular chromatophore membrane. The enzyme catalyses ATP + H2O + 4 H(+)(in) = ADP + phosphate + 5 H(+)(out). In terms of biological role, produces ATP from ADP in the presence of a proton gradient across the membrane. The catalytic sites are hosted primarily by the beta subunits. The chain is ATP synthase subunit beta from Rhodobacter capsulatus (Rhodopseudomonas capsulata).